A 266-amino-acid polypeptide reads, in one-letter code: Glucosamine-6-phosphate deaminase (266 aa).

Residue D72 is the Proton acceptor; for enolization step of the active site. D141 functions as the For ring-opening step in the catalytic mechanism. H143 (proton acceptor; for ring-opening step) is an active-site residue. E148 acts as the For ring-opening step in catalysis.

The protein belongs to the glucosamine/galactosamine-6-phosphate isomerase family. NagB subfamily. Homohexamer.

The catalysed reaction is alpha-D-glucosamine 6-phosphate + H2O = beta-D-fructose 6-phosphate + NH4(+). Its pathway is amino-sugar metabolism; N-acetylneuraminate degradation; D-fructose 6-phosphate from N-acetylneuraminate: step 5/5. Allosterically activated by N-acetylglucosamine 6-phosphate (GlcNAc6P). Its function is as follows. Catalyzes the reversible isomerization-deamination of glucosamine 6-phosphate (GlcN6P) to form fructose 6-phosphate (Fru6P) and ammonium ion. This Vibrio campbellii (strain ATCC BAA-1116) protein is Glucosamine-6-phosphate deaminase.